The sequence spans 411 residues: Zinc finger protein draculin (411 aa).

Residues 1–33 (MKNTTKPCRTEHHNAEGQRDRMEGNKKGETKAK) form a disordered region. Residues 8–32 (CRTEHHNAEGQRDRMEGNKKGETKA) are compositionally biased toward basic and acidic residues. C2H2-type zinc fingers lie at residues 36–58 (VACS…MRVH), 64–86 (YRCD…LDIH), 92–114 (YTCD…MTLH), 120–142 (YKCD…MKLH), 148–170 (HKCE…LMVH), 176–198 (YTCD…MNIH), 204–226 (YTCD…MRFH), 232–254 (FTCD…MKIH), 260–282 (YTCD…MTHH), 288–310 (FHCD…IKTH), 316–338 (YSCL…EKRH), 344–366 (FMCF…LPVH), and 372–394 (YMCS…EKTH).

In terms of tissue distribution, specifically expressed in the hematopoietic lineage during embryogenesis; first expressed at the late blastula stage around the blastoderm margin. During gastrulation, restricted to the ventral mesoderm, the presumptive prechordal plate and the dorso-marginal cells of the organizer. At the 3-somite stage, strongly expressed in a caudal domain (marking the erythroid lineage) and a cephalic domain of the lateral mesoderm. At the 8- to 10-somite stage, caudal expression is in two bands of lateral mesoderm which later converge at the midline. Anterior expression is also in two bands of lateral mesoderm which converge as two patches at the midline by the 15-somite stage, with increased scattering of single cells (macrophage precursors) away from the midline to the yolksac. Once at the yolksac, expression is lost. By 20-24 hours post-fertilization (hpf), expressed in proerythroblasts in the erythroid blood island centered above the uro-genital opening. Expression persists in circulating erythroblasts but is lost in mature erythrocytes.

This Danio rerio (Zebrafish) protein is Zinc finger protein draculin.